We begin with the raw amino-acid sequence, 328 residues long: Phenylalanine--tRNA ligase alpha subunit (328 aa).

E245 contacts Mg(2+).

Belongs to the class-II aminoacyl-tRNA synthetase family. Phe-tRNA synthetase alpha subunit type 1 subfamily. As to quaternary structure, tetramer of two alpha and two beta subunits. The cofactor is Mg(2+).

Its subcellular location is the cytoplasm. The catalysed reaction is tRNA(Phe) + L-phenylalanine + ATP = L-phenylalanyl-tRNA(Phe) + AMP + diphosphate + H(+). This is Phenylalanine--tRNA ligase alpha subunit from Helicobacter acinonychis (strain Sheeba).